The chain runs to 63 residues: MPKMKSVKSAVKRFKVGKNKIKRGSAFRSHILTKKPAKRMRGLRTAKYVHSTNVKAVEKMLGI.

It belongs to the bacterial ribosomal protein bL35 family.

This is Large ribosomal subunit protein bL35 from Campylobacter jejuni subsp. jejuni serotype O:2 (strain ATCC 700819 / NCTC 11168).